Here is a 242-residue protein sequence, read N- to C-terminus: Probable transcriptional regulatory protein BamMC406_2210 (242 aa).

It belongs to the TACO1 family.

It localises to the cytoplasm. The polypeptide is Probable transcriptional regulatory protein BamMC406_2210 (Burkholderia ambifaria (strain MC40-6)).